A 749-amino-acid polypeptide reads, in one-letter code: Homeobox-leucine zipper protein ROC7 (749 aa).

The segment at 26–98 is disordered; that stretch reads LDQHQQHQHQ…KKRYHRHTQH (73 aa). The span at 46-57 shows a compositional bias: basic and acidic residues; that stretch reads SDGRAPRDELEM. Gly residues predominate over residues 68-79; it reads SGGGGGGGGSGG. Basic residues predominate over residues 86–97; that stretch reads RPRKKRYHRHTQ. Residues 88–147 constitute a DNA-binding region (homeobox); it reads RKKRYHRHTQHQIQELEAFFKECPHPDDKQRKELSRELGLEPLQVKFWFQNKRTQMKTQH. A coiled-coil region spans residues 137 to 218; the sequence is QNKRTQMKTQ…DRISAIAAKY (82 aa). Positions 256-494 constitute an START domain; that stretch reads ADFDKPLVIE…LERQCERLAS (239 aa).

This sequence belongs to the HD-ZIP homeobox family. Class IV subfamily.

The protein localises to the nucleus. Probable transcription factor. This is Homeobox-leucine zipper protein ROC7 (ROC7) from Oryza sativa subsp. japonica (Rice).